A 217-amino-acid chain; its full sequence is Fucoxanthin-chlorophyll a-c binding protein A, chloroplastic (217 aa).

Residues 1–39 constitute a chloroplast transit peptide; the sequence is MKSAVMAVACAAAPGLRRPSAFNGAALTTSAKSSSAMKM. The next 3 helical transmembrane spans lie at 81–101, 122–142, and 183–203; these read IAML…PGML, IPPA…LAVM, and GRAA…NNKP.

Belongs to the fucoxanthin chlorophyll protein family. In terms of assembly, the LHC complex of chromophytic algae is composed of fucoxanthin, chlorophyll A and C bound non-covalently by fucoxanthin chlorophyll proteins (FCPs). The ratio of pigments in this LHC is; fucoxanthin: chlorophyll C: chlorophyll A; (0.6-1): (0.1-0.3): (1).

The protein localises to the plastid. It is found in the chloroplast thylakoid membrane. The light-harvesting complex (LHC) functions as a light receptor, it captures and delivers excitation energy to photosystems with which it is closely associated. Energy is transferred from the carotenoid and chlorophyll C (or B) to chlorophyll A and the photosynthetic reaction centers where it is used to synthesize ATP and reducing power. In Macrocystis pyrifera (Giant kelp), this protein is Fucoxanthin-chlorophyll a-c binding protein A, chloroplastic (FCPA).